Here is a 586-residue protein sequence, read N- to C-terminus: CTP synthase 2 (586 aa).

Residues 300–554 enclose the Glutamine amidotransferase type-1 domain; it reads SIALVGKYTK…LAATGTLNTH (255 aa). Residues cysteine 399, histidine 526, and glutamate 528 each act as for GATase activity in the active site. Phosphoserine is present on residues serine 568, serine 571, and serine 574.

It belongs to the CTP synthase family.

It catalyses the reaction UTP + L-glutamine + ATP + H2O = CTP + L-glutamate + ADP + phosphate + 2 H(+). Its pathway is pyrimidine metabolism; CTP biosynthesis via de novo pathway; CTP from UDP: step 2/2. In terms of biological role, catalyzes the ATP-dependent amination of UTP to CTP with either L-glutamine or ammonia as the source of nitrogen. Constitutes the rate-limiting enzyme in the synthesis of cytosine nucleotides. The polypeptide is CTP synthase 2 (Ctps2) (Rattus norvegicus (Rat)).